The following is a 327-amino-acid chain: Xylosidase/arabinosidase 43A (327 aa).

The active-site Proton acceptor is D12. Catalysis depends on E228, which acts as the Proton donor.

It belongs to the glycosyl hydrolase 43 family.

Its subcellular location is the secreted. The enzyme catalyses Hydrolysis of (1-&gt;4)-beta-D-xylans, to remove successive D-xylose residues from the non-reducing termini.. The catalysed reaction is Hydrolysis of terminal non-reducing alpha-L-arabinofuranoside residues in alpha-L-arabinosides.. With respect to regulation, activity is inhibited by Ag(+), Li(+), Pb(2+), Cu(2+), Cr(3+), Co(3+), Fe(3+), Ni(2+), Mg(2+), Zn(2+), EDTA and SDS; but not by Mn(2+), Ca(2+) and beta-mercaptoethanol. In terms of biological role, bifunctional beta-xylosidase/alpha-L-arabinosidases with a low level of xylanase activity. Is most active on 4-nitrophenyl beta-D-xylopyranoside (pNPX) (defined as 100%), moderate on p-nitrophenyl-alpha-L-arabinofuranoside (pNPA) (23.7%), and weak on beechwood xylan (15.9%) and birchwood xylan (15.2%). Is able to attack xylooligosacchardies with degrees of polymerisation of 2-5, releasing the amounts of reducing sugars in the order of xylopentose &gt; xylotetraose &gt; xylotriose &gt; xylobiose, i.e. the rate of xylose released from xylooligosacchardies increased with the chain length. No activity is detected in the presence of carboxymethyl cellulose-sodium (CMC-Na), sugar beet arabinan, AZCL-arabinan (debranched), 4-nitrophenyl a-D - galactopyranoside, 2-nitrophenyl beta-D-galactopyranoside, and 4-nitrophenyl alpha-D-glucopyranoside. In Humicola insolens (Soft-rot fungus), this protein is Xylosidase/arabinosidase 43A.